Here is a 1711-residue protein sequence, read N- to C-terminus: Receptor-type tyrosine-protein phosphatase V (1711 aa).

An N-terminal signal peptide occupies residues 1 to 17; that stretch reads MRPLILLAALLWLQGFL. Residues 18 to 1074 are Extracellular-facing; the sequence is AEDDACSSLE…SEPRASISLA (1057 aa). Fibronectin type-III domains lie at 37–129, 130–222, 218–305, 306–391, 393–470, 475–569, 565–654, 655–749, 744–831, and 832–926; these read PLLS…TAPT, VVRG…VPPD, PVPP…EWTY, PSYP…LAES, ALPR…ISGY, PPQS…APPT, PAPP…TGWT, PPSA…IPNE, PLIP…VLSV, and EPGP…SAEA. N42, N74, N89, N117, N174, N239, and N259 each carry an N-linked (GlcNAc...) asparagine glycan. A glycan (N-linked (GlcNAc...) asparagine) is linked at N431. Residues N570, N620, N649, N663, and N737 are each glycosylated (N-linked (GlcNAc...) asparagine). 4 N-linked (GlcNAc...) asparagine glycosylation sites follow: N851, N882, N970, and N982. Residues 1075 to 1095 traverse the membrane as a helical segment; that stretch reads IIPLTVMLGAVVGSIVIVCAV. The Cytoplasmic segment spans residues 1096-1711; it reads LCLLRWRCLK…PRAGKWPAPC (616 aa). Tyrosine-protein phosphatase domains lie at 1150 to 1409 and 1427 to 1696; these read FFQE…LLNK and DFAQ…LNSA. Substrate is bound by residues D1316, 1350 to 1356, and Q1394; that span reads CSAGVGR. The active-site Phosphocysteine intermediate is the C1350.

This sequence belongs to the protein-tyrosine phosphatase family. Receptor class 3 subfamily. The cytoplasmic domain contains potential phosphorylation sites. In terms of tissue distribution, bone and testis. In the latter, restricted to the basal portion of the seminiferous tubule.

It localises to the membrane. The catalysed reaction is O-phospho-L-tyrosyl-[protein] + H2O = L-tyrosyl-[protein] + phosphate. Functionally, protein tyrosine phosphatase that acts as a regulator of energy metabolism. Prevents decarboxylation of osteocalcin (Bglap) via an indirect mechanism, preventing the hormone activity of osteocalcin. Functions in signaling pathways during bone remodeling, as well as serve a broader role in cell interactions associated with differentiation in bone and testis. Associated with differentiation in bone and testis. This Rattus norvegicus (Rat) protein is Receptor-type tyrosine-protein phosphatase V (Ptprv).